A 320-amino-acid polypeptide reads, in one-letter code: Malate dehydrogenase (320 aa).

Residues 10 to 15 (GAGNIG) and D34 contribute to the NAD(+) site. R83 and R89 together coordinate substrate. NAD(+) contacts are provided by residues N96 and 119–121 (ITN). N121 and R152 together coordinate substrate. H176 serves as the catalytic Proton acceptor.

This sequence belongs to the LDH/MDH superfamily. MDH type 3 family.

The catalysed reaction is (S)-malate + NAD(+) = oxaloacetate + NADH + H(+). In terms of biological role, catalyzes the reversible oxidation of malate to oxaloacetate. The sequence is that of Malate dehydrogenase from Novosphingobium aromaticivorans (strain ATCC 700278 / DSM 12444 / CCUG 56034 / CIP 105152 / NBRC 16084 / F199).